The sequence spans 158 residues: Cyclic pyranopterin monophosphate synthase (158 aa).

Substrate is bound by residues 76-78 (LCH) and 114-115 (ME). The active site involves Asp-129.

It belongs to the MoaC family. In terms of assembly, homohexamer; trimer of dimers.

The catalysed reaction is (8S)-3',8-cyclo-7,8-dihydroguanosine 5'-triphosphate = cyclic pyranopterin phosphate + diphosphate. Its pathway is cofactor biosynthesis; molybdopterin biosynthesis. Its function is as follows. Catalyzes the conversion of (8S)-3',8-cyclo-7,8-dihydroguanosine 5'-triphosphate to cyclic pyranopterin monophosphate (cPMP). The protein is Cyclic pyranopterin monophosphate synthase of Shewanella piezotolerans (strain WP3 / JCM 13877).